Reading from the N-terminus, the 1091-residue chain is MLPAAALPWTLFFLGAAASLQVDIVPSQGEISVGESKFFLCQVAGEAKYKDISWFSPNGEKLTPNQQRISVVRNDDFSSTLTIYNANIDDAGIYKCVVSSVEEGDSEATVNVKIFQKLMFKNAPTPQEFKEGDDAVIVCDVVSSLPPTIIWKHKGRDVMLKKDVRFIVLSNNYLQIRGIKKTDEGTYRCEGRILARGEINFKDIQVIVNVPPSVRARQSTMNATANLSQSVTLACDADGFPEPTMTWTKDGEPIEQEDNEEKYSFNYDGSELIIKKVDKSDEAEYICIAENKAGEQDATIHLKVFAKPKITYVENKTAMELEDQITLTCEASGDPIPSITWKTSTRNISNEEKTLDGRIVVRSHARVSSLTLKEIQYTDAGEYVCTASNTIGQDSQAMYLEVQYAPKLQGPVAVYTWEGNQVNITCEVFAYPSAVISWFRDGQLLPSSNYSNIKIYNTPSASYLEVTPDSENDFGNYNCTAVNRIGQESSEFILVQADTPSSPSIDRVEPYSSTARVEFDEPEATGGVPILKYKAEWRALGEGEWHSRLYDAKEANVEGTITISGLKPETTYSVRLSAVNGKGVGEISLPSDFKTQPVREPSAPKLEGQMGEDGNSIKVNVIKQDDGGSPIRHYLIKYKAKHSSEWKPEIRLPSGIDHVMLKSLDWNAEYEVYVIAENQQGKSKPAHYAFRTSAQPTVIPASTSPTSGLGTAAIVGILIVIFVLLLVAVDVTCYFLNKCGLLMCIAVNLCGKSGPGAKGKDMEEGKAAFSKDESKEPIVEVRTEEERTPNHDGGKHTEPNETTPLTEPEHTADTAATVEDMLPSVTTGTTNSDTITETFATAQNSPTSETTTLTSSIAPPATAIPDSNAMSPGQATPAKAGASPVSPPPPSSTPKVAPLVDLSDTPSSAPATNNLSSSVLSNQGAVLSPSTVANMAETSKAAAGNKSAAPTPANLTSPPAPSEPKQEVSSTKSPEKEAAQPSTVKSPTETAKNPSNPKSEAASGGTTNPSQNEDFKMDEGTFKTPDIDLAKDVFAALGTTTPASVASGQARELASSTADSSVPAAPAKTEKTPVEDKSEVQATEIRHLQQK.

The first 19 residues, 1-19 (MLPAAALPWTLFFLGAAAS), serve as a signal peptide directing secretion. 5 Ig-like C2-type domains span residues 20–113 (LQVD…VNVK), 116–205 (QKLM…KDIQ), 212–301 (PSVR…ATIH), 308–403 (PKIT…LEVQ), and 406–495 (PKLQ…FILV). Over 20-711 (LQVDIVPSQG…STSPTSGLGT (692 aa)) the chain is Extracellular. Cystine bridges form between cysteine 41–cysteine 96 and cysteine 139–cysteine 189. Heparin is bound by residues 152 to 156 (KHKGR) and 161 to 165 (KKDVR). Residue asparagine 222 is glycosylated (N-linked (GlcNAc...) asparagine). A disulfide bridge connects residues cysteine 235 and cysteine 287. 5 N-linked (GlcNAc...) asparagine glycosylation sites follow: asparagine 315, asparagine 347, asparagine 423, asparagine 449, and asparagine 478. A disulfide bridge links cysteine 329 with cysteine 385. Cysteine 426 and cysteine 479 are oxidised to a cystine. 2 consecutive Fibronectin type-III domains span residues 499–598 (TPSS…TQPV) and 600–696 (EPSA…SAQP). A helical transmembrane segment spans residues 712–729 (AAIVGILIVIFVLLLVAV). At 730–1091 (DVTCYFLNKC…ATEIRHLQQK (362 aa)) the chain is on the cytoplasmic side. 4 disordered regions span residues 756–809 (GAKG…TEPE), 840–916 (ATAQ…NNLS), 937–1023 (ETSK…GTFK), and 1041–1091 (TPAS…LQQK). The segment covering 758–799 (KGKDMEEGKAAFSKDESKEPIVEVRTEEERTPNHDGGKHTEP) has biased composition (basic and acidic residues). Low complexity predominate over residues 845–856 (SPTSETTTLTSS). Composition is skewed to polar residues over residues 904–916 (DTPSSAPATNNLS) and 980–1012 (QPSTVKSPTETAKNPSNPKSEAASGGTTNPSQN). Basic and acidic residues-rich tracts occupy residues 1013-1023 (EDFKMDEGTFK) and 1068-1091 (KTEKTPVEDKSEVQATEIRHLQQK).

In terms of processing, polysialylated by ST8SIA2 and ST8SIA4. Polysialylation modulates cell interactions by confering both attractive and repulsive properties that are highly regulated by ST8SIA2 and ST8SIA4. Polysialylation is formed on a-2,3-linked sialic acid of core glycans.

Its subcellular location is the cell membrane. Functionally, this protein is a cell adhesion molecule involved in neuron-neuron adhesion, neurite fasciculation, outgrowth of neurites, etc. This Gallus gallus (Chicken) protein is Neural cell adhesion molecule 1.